A 260-amino-acid chain; its full sequence is HMP-PP phosphatase (260 aa).

Aspartate 8 (nucleophile) is an active-site residue. Mg(2+)-binding residues include aspartate 8, aspartate 10, and aspartate 212.

This sequence belongs to the HAD-like hydrolase superfamily. Cof family. It depends on Mg(2+) as a cofactor.

The enzyme catalyses 4-amino-2-methyl-5-(diphosphooxymethyl)pyrimidine + H2O = 4-amino-2-methyl-5-(phosphooxymethyl)pyrimidine + phosphate + H(+). In terms of biological role, catalyzes the hydrolysis of 4-amino-2-methyl-5-hydroxymethylpyrimidine pyrophosphate (HMP-PP) to 4-amino-2-methyl-5-hydroxymethylpyrimidine phosphate (HMP-P). The sequence is that of HMP-PP phosphatase from Shigella boydii serotype 4 (strain Sb227).